Consider the following 293-residue polypeptide: Fructose-bisphosphate aldolase (293 aa).

A D-glyceraldehyde 3-phosphate-binding site is contributed by Ser50. The active-site Proton donor is the Asp85. Residues His86, Asp106, Glu136, and His178 each contribute to the Zn(2+) site. Gly179 lines the dihydroxyacetone phosphate pocket. His208 is a Zn(2+) binding site. Residues Gly209–Ser211 and Asn230–Thr233 each bind dihydroxyacetone phosphate.

Belongs to the class II fructose-bisphosphate aldolase family. It depends on Zn(2+) as a cofactor.

It carries out the reaction beta-D-fructose 1,6-bisphosphate = D-glyceraldehyde 3-phosphate + dihydroxyacetone phosphate. The protein operates within carbohydrate degradation; glycolysis; D-glyceraldehyde 3-phosphate and glycerone phosphate from D-glucose: step 4/4. In terms of biological role, catalyzes the aldol condensation of dihydroxyacetone phosphate (DHAP or glycerone-phosphate) with glyceraldehyde 3-phosphate (G3P) to form fructose 1,6-bisphosphate (FBP) in gluconeogenesis and the reverse reaction in glycolysis. The chain is Fructose-bisphosphate aldolase (fba) from Streptococcus pyogenes serotype M3 (strain ATCC BAA-595 / MGAS315).